The primary structure comprises 211 residues: V-type ATP synthase subunit D (211 aa).

The protein belongs to the V-ATPase D subunit family.

Its function is as follows. Produces ATP from ADP in the presence of a proton gradient across the membrane. The sequence is that of V-type ATP synthase subunit D from Enterococcus faecalis (strain ATCC 700802 / V583).